We begin with the raw amino-acid sequence, 258 residues long: 5'-nucleotidase SurE (258 aa).

Residues D16, D17, S47, and N99 each coordinate a divalent metal cation.

Belongs to the SurE nucleotidase family. It depends on a divalent metal cation as a cofactor.

The protein localises to the cytoplasm. It carries out the reaction a ribonucleoside 5'-phosphate + H2O = a ribonucleoside + phosphate. Its function is as follows. Nucleotidase that shows phosphatase activity on nucleoside 5'-monophosphates. The sequence is that of 5'-nucleotidase SurE from Coxiella burnetii (strain Dugway 5J108-111).